A 1254-amino-acid chain; its full sequence is DNA polymerase gamma (1254 aa).

Basic and acidic residues predominate over residues 1125 to 1137 (RKKENRIDDENKK). Disordered regions lie at residues 1125 to 1145 (RKKE…KKNT) and 1202 to 1240 (YKKK…TNRN). The span at 1208 to 1217 (QARTASSSPI) shows a compositional bias: polar residues. Positions 1219 to 1231 (KTAKAVHSKKLPA) are enriched in basic residues.

It belongs to the DNA polymerase type-A family. The cofactor is Mg(2+).

The protein localises to the mitochondrion. It carries out the reaction DNA(n) + a 2'-deoxyribonucleoside 5'-triphosphate = DNA(n+1) + diphosphate. In terms of biological role, involved in the replication of mitochondrial DNA. The protein is DNA polymerase gamma (MIP1) of Saccharomyces cerevisiae (strain ATCC 204508 / S288c) (Baker's yeast).